Consider the following 324-residue polypeptide: Acetyl-coenzyme A carboxylase carboxyl transferase subunit alpha (324 aa).

Residues 44–298 (QLEAKATQLR…KTAIVKSLDD (255 aa)) form the CoA carboxyltransferase C-terminal domain.

This sequence belongs to the AccA family. In terms of assembly, acetyl-CoA carboxylase is a heterohexamer composed of biotin carboxyl carrier protein (AccB), biotin carboxylase (AccC) and two subunits each of ACCase subunit alpha (AccA) and ACCase subunit beta (AccD).

Its subcellular location is the cytoplasm. The enzyme catalyses N(6)-carboxybiotinyl-L-lysyl-[protein] + acetyl-CoA = N(6)-biotinyl-L-lysyl-[protein] + malonyl-CoA. It participates in lipid metabolism; malonyl-CoA biosynthesis; malonyl-CoA from acetyl-CoA: step 1/1. Functionally, component of the acetyl coenzyme A carboxylase (ACC) complex. First, biotin carboxylase catalyzes the carboxylation of biotin on its carrier protein (BCCP) and then the CO(2) group is transferred by the carboxyltransferase to acetyl-CoA to form malonyl-CoA. The chain is Acetyl-coenzyme A carboxylase carboxyl transferase subunit alpha from Trichodesmium erythraeum (strain IMS101).